Consider the following 115-residue polypeptide: Large ribosomal subunit protein bL19 (115 aa).

Belongs to the bacterial ribosomal protein bL19 family.

Its function is as follows. This protein is located at the 30S-50S ribosomal subunit interface and may play a role in the structure and function of the aminoacyl-tRNA binding site. The chain is Large ribosomal subunit protein bL19 from Enterobacter sp. (strain 638).